The chain runs to 207 residues: Coiled-coil domain-containing protein 124 homolog (207 aa).

The segment at 1 to 90 (MGNPKKRAEK…KAAKKNSSLD (90 aa)) is disordered. The stretch at 5–71 (KKRAEKAEAA…RLEKEEMESL (67 aa)) forms a coiled coil. Basic and acidic residues-rich tracts occupy residues 9–28 (EKAEAAKSRKQDEEKKKKDA) and 41–65 (NKKEQEAEKRKAALERKAERERLEK).

Belongs to the CCDC124 family. As to quaternary structure, associates with translationally inactive ribosomes in the nonrotated state.

It localises to the cytoplasm. It is found in the nucleus. In terms of biological role, ribosome-binding protein involved in ribosome hibernation by associating with translationally inactive ribosomes. Required for translational recovery after starvation from stationary phase. May facilitate rapid translation reactivation by stabilizing the recycling-competent state of inactive ribosomes. The polypeptide is Coiled-coil domain-containing protein 124 homolog (Schizosaccharomyces pombe (strain 972 / ATCC 24843) (Fission yeast)).